Reading from the N-terminus, the 221-residue chain is Serine protease inhibitor 7 (221 aa).

An N-terminal signal peptide occupies residues 1-22; that stretch reads MKCLFLLCLCLVPIVVFSSTFT. A propeptide spanning residues 23–28 is cleaved from the precursor; sequence SKNPIN. Residues 25-30 carry the Vacuolar targeting signal motif; sequence NPINLP. 2 cysteine pairs are disulfide-bonded: C76/C125 and C174/C191.

It belongs to the protease inhibitor I3 (leguminous Kunitz-type inhibitor) family. In terms of tissue distribution, tubers. Not detected in root, stem, leaves or flower bud.

Its subcellular location is the vacuole. Functionally, inhibitor of trypsin (serine protease). May protect the plant by inhibiting proteases of invading organisms. The protein is Serine protease inhibitor 7 of Solanum tuberosum (Potato).